Here is a 1732-residue protein sequence, read N- to C-terminus: Serine/threonine-protein kinase MRCK alpha (1732 aa).

In terms of domain architecture, Protein kinase spans Phe77–Phe343. ATP contacts are provided by residues Ile83–Val91 and Lys106. Asp201 serves as the catalytic Proton acceptor. 2 positions are modified to phosphoserine; by autocatalysis: Ser222 and Ser234. Thr240 is modified (phosphothreonine; by autocatalysis). Residues Ser344–Ser414 form the AGC-kinase C-terminal domain. Coiled coils occupy residues Asn437–Gln670, Ser713–Gln820, and Leu880–Gly943. Positions Cys973–Ala1002 are disordered. The Phorbol-ester/DAG-type zinc-finger motif lies at Thr1012 to Cys1062. Positions Gly1082 to Lys1201 constitute a PH domain. Position 1127 is a phosphoserine (Ser1127). The 273-residue stretch at Ile1227 to Asn1499 folds into the CNH domain. Ser1545 carries the post-translational modification Phosphoserine. The region spanning Ile1571–Gly1584 is the CRIB domain. The segment at Leu1592–Pro1732 is disordered. Polar residues predominate over residues Ser1604–Lys1619. Phosphoserine is present on residues Ser1611, Ser1613, Ser1629, Ser1651, Ser1664, Ser1669, Ser1693, Ser1719, and Ser1721. Low complexity predominate over residues Gly1625–Ala1640. Over residues Pro1665 to Gly1674 the composition is skewed to low complexity.

The protein belongs to the protein kinase superfamily. AGC Ser/Thr protein kinase family. DMPK subfamily. As to quaternary structure, homodimer and homotetramer via the coiled coil regions. Interacts tightly with GTP-bound but not GDP-bound CDC42. Forms a tripartite complex with MYO18A and LURAP1 with the latter acting as an adapter connecting CDC42BPA and MYO18A. LURAP1 binding results in activation of CDC42BPA by abolition of its negative autoregulation. Interacts with LURAP1. Interacts (via AGC-kinase C-terminal domain) with FAM89B/LRAP25 (via LRR repeat). Forms a tripartite complex with FAM89B/LRAP25 and LIMK1. The cofactor is Mg(2+). Proteolytically cleaved by caspases upon apoptosis induction. The cleavage at Asp-478 by CASP3 increases its kinase activity (in vitro). As to expression, highly expressed in the brain and lung and present in lower levels in all other tissues tested.

It is found in the cytoplasm. Its subcellular location is the cell projection. It localises to the lamellipodium. It carries out the reaction L-seryl-[protein] + ATP = O-phospho-L-seryl-[protein] + ADP + H(+). It catalyses the reaction L-threonyl-[protein] + ATP = O-phospho-L-threonyl-[protein] + ADP + H(+). With respect to regulation, maintained in an inactive, closed conformation by an interaction between the kinase domain and the negative autoregulatory C-terminal coiled-coil region. Agonist binding to the phorbol ester binding site disrupts this, releasing the kinase domain to allow N-terminus-mediated dimerization and kinase activation by transautophosphorylation. Inhibited by chelerythrine chloride. Its function is as follows. Serine/threonine-protein kinase which is an important downstream effector of CDC42 and plays a role in the regulation of cytoskeleton reorganization and cell migration. Regulates actin cytoskeletal reorganization via phosphorylation of PPP1R12A and MYL9/MLC2. In concert with MYO18A and LURAP1, is involved in modulating lamellar actomyosin retrograde flow that is crucial to cell protrusion and migration. Phosphorylates: PPP1R12C, LIMK1 and LIMK2. May play a role in TFRC-mediated iron uptake. In concert with FAM89B/LRAP25 mediates the targeting of LIMK1 to the lamellipodium resulting in its activation and subsequent phosphorylation of CFL1 which is important for lamellipodial F-actin regulation. Triggers the formation of an extrusion apical actin ring required for epithelial extrusion of apoptotic cells. The protein is Serine/threonine-protein kinase MRCK alpha of Rattus norvegicus (Rat).